The chain runs to 164 residues: Protein 4 (164 aa).

The polypeptide is Protein 4 (Lettuce big-vein associated virus (isolate Japan/Kagawa) (LBVaV)).